Consider the following 535-residue polypeptide: GMP synthase [glutamine-hydrolyzing] (535 aa).

The Glutamine amidotransferase type-1 domain maps to 21 to 211; the sequence is LIVILDFGSQ…VYHICDCEPT (191 aa). Catalysis depends on cysteine 98, which acts as the Nucleophile. Catalysis depends on residues histidine 185 and glutamate 187. Residues 212-410 form the GMPS ATP-PPase domain; sequence WTTAAFVEEA…LGLPEEIVQR (199 aa). Position 239-245 (239-245) interacts with ATP; sequence SGGVDSS.

As to quaternary structure, homodimer.

The enzyme catalyses XMP + L-glutamine + ATP + H2O = GMP + L-glutamate + AMP + diphosphate + 2 H(+). It functions in the pathway purine metabolism; GMP biosynthesis; GMP from XMP (L-Gln route): step 1/1. In terms of biological role, catalyzes the synthesis of GMP from XMP. The chain is GMP synthase [glutamine-hydrolyzing] from Thermosynechococcus vestitus (strain NIES-2133 / IAM M-273 / BP-1).